Consider the following 161-residue polypeptide: Probable chemoreceptor glutamine deamidase CheD (161 aa).

This sequence belongs to the CheD family.

It carries out the reaction L-glutaminyl-[protein] + H2O = L-glutamyl-[protein] + NH4(+). Functionally, probably deamidates glutamine residues to glutamate on methyl-accepting chemotaxis receptors (MCPs), playing an important role in chemotaxis. The protein is Probable chemoreceptor glutamine deamidase CheD of Lachnoclostridium phytofermentans (strain ATCC 700394 / DSM 18823 / ISDg) (Clostridium phytofermentans).